We begin with the raw amino-acid sequence, 75 residues long: CDC42 small effector protein 2-B (75 aa).

2 S-palmitoyl cysteine lipidation sites follow: cysteine 10 and cysteine 11. The CRIB domain maps to 29–42; it reads IGEPMNFVHTAHVG.

It belongs to the CDC42SE/SPEC family.

The protein localises to the cytoplasm. Its subcellular location is the cytoskeleton. The protein resides in the cell membrane. Functionally, probably involved in the organization of the actin cytoskeleton by acting downstream of CDC42, inducing actin filament assembly. This Xenopus laevis (African clawed frog) protein is CDC42 small effector protein 2-B (cdc42se2-b).